The following is a 482-amino-acid chain: Glutamyl-tRNA(Gln) amidotransferase subunit A (482 aa).

Residues Lys-75 and Ser-150 each act as charge relay system in the active site. The active-site Acyl-ester intermediate is Ser-174.

This sequence belongs to the amidase family. GatA subfamily. Heterotrimer of A, B and C subunits.

It catalyses the reaction L-glutamyl-tRNA(Gln) + L-glutamine + ATP + H2O = L-glutaminyl-tRNA(Gln) + L-glutamate + ADP + phosphate + H(+). Functionally, allows the formation of correctly charged Gln-tRNA(Gln) through the transamidation of misacylated Glu-tRNA(Gln) in organisms which lack glutaminyl-tRNA synthetase. The reaction takes place in the presence of glutamine and ATP through an activated gamma-phospho-Glu-tRNA(Gln). In Deinococcus radiodurans (strain ATCC 13939 / DSM 20539 / JCM 16871 / CCUG 27074 / LMG 4051 / NBRC 15346 / NCIMB 9279 / VKM B-1422 / R1), this protein is Glutamyl-tRNA(Gln) amidotransferase subunit A.